A 343-amino-acid chain; its full sequence is GTPase Obg (343 aa).

The Obg domain maps to 1–158 (MFIDEAKIRV…FTLRLELKVL (158 aa)). A disordered region spans residues 121–140 (RGGRGNQHFATSTHQAPREH). An OBG-type G domain is found at 159–333 (ADIGIVGYPN…LKYAMAERVR (175 aa)). Residues 165 to 172 (GYPNVGKS), 190 to 194 (FTTLE), 215 to 218 (DIPG), 286 to 289 (SKID), and 314 to 316 (SAV) each bind GTP. Mg(2+) contacts are provided by Ser172 and Thr192.

This sequence belongs to the TRAFAC class OBG-HflX-like GTPase superfamily. OBG GTPase family. Monomer. Mg(2+) is required as a cofactor.

It is found in the cytoplasm. Functionally, an essential GTPase which binds GTP, GDP and possibly (p)ppGpp with moderate affinity, with high nucleotide exchange rates and a fairly low GTP hydrolysis rate. Plays a role in control of the cell cycle, stress response, ribosome biogenesis and in those bacteria that undergo differentiation, in morphogenesis control. This is GTPase Obg from Acidobacterium capsulatum (strain ATCC 51196 / DSM 11244 / BCRC 80197 / JCM 7670 / NBRC 15755 / NCIMB 13165 / 161).